The sequence spans 320 residues: Phosphate acetyltransferase (320 aa).

It belongs to the phosphate acetyltransferase and butyryltransferase family.

The protein localises to the cytoplasm. It catalyses the reaction acetyl-CoA + phosphate = acetyl phosphate + CoA. It participates in metabolic intermediate biosynthesis; acetyl-CoA biosynthesis; acetyl-CoA from acetate: step 2/2. The sequence is that of Phosphate acetyltransferase (pta) from Mycoplasma pneumoniae (strain ATCC 29342 / M129 / Subtype 1) (Mycoplasmoides pneumoniae).